The following is a 283-amino-acid chain: Pantothenate synthetase (283 aa).

34–41 (MGALHEGH) serves as a coordination point for ATP. The Proton donor role is filled by His-41. Gln-65 is a (R)-pantoate binding site. Gln-65 is a beta-alanine binding site. ATP is bound at residue 152 to 155 (GEKD). Residue Gln-158 participates in (R)-pantoate binding. Residue 189–192 (MSSR) participates in ATP binding.

This sequence belongs to the pantothenate synthetase family. In terms of assembly, homodimer.

Its subcellular location is the cytoplasm. It catalyses the reaction (R)-pantoate + beta-alanine + ATP = (R)-pantothenate + AMP + diphosphate + H(+). It participates in cofactor biosynthesis; (R)-pantothenate biosynthesis; (R)-pantothenate from (R)-pantoate and beta-alanine: step 1/1. Its function is as follows. Catalyzes the condensation of pantoate with beta-alanine in an ATP-dependent reaction via a pantoyl-adenylate intermediate. In Rhodopseudomonas palustris (strain BisA53), this protein is Pantothenate synthetase.